The following is a 336-amino-acid chain: Glucokinase (336 aa).

12–17 contacts ATP; it reads ADIGGT.

Belongs to the bacterial glucokinase family.

The protein resides in the cytoplasm. It catalyses the reaction D-glucose + ATP = D-glucose 6-phosphate + ADP + H(+). The polypeptide is Glucokinase (Helicobacter pylori (strain J99 / ATCC 700824) (Campylobacter pylori J99)).